Here is a 937-residue protein sequence, read N- to C-terminus: Isoleucine--tRNA ligase (937 aa).

The 'HIGH' region signature appears at 58 to 68 (PYANGNIHIGH). E560 contributes to the L-isoleucyl-5'-AMP binding site. Residues 601–605 (KMSKS) carry the 'KMSKS' region motif. K604 is an ATP binding site. Positions 900, 903, 920, and 923 each coordinate Zn(2+).

The protein belongs to the class-I aminoacyl-tRNA synthetase family. IleS type 1 subfamily. Monomer. It depends on Zn(2+) as a cofactor.

It is found in the cytoplasm. It carries out the reaction tRNA(Ile) + L-isoleucine + ATP = L-isoleucyl-tRNA(Ile) + AMP + diphosphate. Its function is as follows. Catalyzes the attachment of isoleucine to tRNA(Ile). As IleRS can inadvertently accommodate and process structurally similar amino acids such as valine, to avoid such errors it has two additional distinct tRNA(Ile)-dependent editing activities. One activity is designated as 'pretransfer' editing and involves the hydrolysis of activated Val-AMP. The other activity is designated 'posttransfer' editing and involves deacylation of mischarged Val-tRNA(Ile). In Thioalkalivibrio sulfidiphilus (strain HL-EbGR7), this protein is Isoleucine--tRNA ligase.